A 307-amino-acid chain; its full sequence is Transcription initiation factor IIB (307 aa).

2 repeat units span residues 123 to 206 and 217 to 298.

This sequence belongs to the TFIIB family.

Stabilizes TBP binding to an archaeal box-A promoter. Also responsible for recruiting RNA polymerase II to the pre-initiation complex (DNA-TBP-TFIIB). The chain is Transcription initiation factor IIB from Sulfolobus acidocaldarius (strain ATCC 33909 / DSM 639 / JCM 8929 / NBRC 15157 / NCIMB 11770).